The primary structure comprises 871 residues: DNA mismatch repair protein MutS (871 aa).

Residue 605 to 612 (GPNMGGKS) participates in ATP binding. The interval 791–840 (PQRPTSASVEQPVDSAKTETAATAEEPQQLSLFPTDEETKPKQPTKKERS) is disordered. A compositionally biased stretch (basic and acidic residues) spans 827–840 (EETKPKQPTKKERS).

It belongs to the DNA mismatch repair MutS family.

In terms of biological role, this protein is involved in the repair of mismatches in DNA. It is possible that it carries out the mismatch recognition step. This protein has a weak ATPase activity. The protein is DNA mismatch repair protein MutS of Shouchella clausii (strain KSM-K16) (Alkalihalobacillus clausii).